Here is an 874-residue protein sequence, read N- to C-terminus: Alanine--tRNA ligase (874 aa).

4 residues coordinate Zn(2+): histidine 563, histidine 567, cysteine 665, and histidine 669.

The protein belongs to the class-II aminoacyl-tRNA synthetase family. It depends on Zn(2+) as a cofactor.

The protein resides in the cytoplasm. It carries out the reaction tRNA(Ala) + L-alanine + ATP = L-alanyl-tRNA(Ala) + AMP + diphosphate. Functionally, catalyzes the attachment of alanine to tRNA(Ala) in a two-step reaction: alanine is first activated by ATP to form Ala-AMP and then transferred to the acceptor end of tRNA(Ala). Also edits incorrectly charged Ser-tRNA(Ala) and Gly-tRNA(Ala) via its editing domain. This is Alanine--tRNA ligase from Actinobacillus succinogenes (strain ATCC 55618 / DSM 22257 / CCUG 43843 / 130Z).